A 702-amino-acid chain; its full sequence is MAKITKTFQYGKHTVTLETGEVARQASGAVIVKMDDTVLLVTAVAAKSAREGQDFFPLTVDYQEKFYAGGRIPGGFFKREGRATEKETLISRLIDRPIRPLFPEDYKNDVQIIATVMSLNPDVDGDIPALIGASAALALAGTPFMGPIGAAKVGYKNGEYILNPTVSELADSQLELVVAGTSNAVLMVESEAALLSEEVMLGAVTFGHREMQKVINAINELTVEAGTKPSTWEAPAKNDALISALKEAIGPRLGEAFQVRDKLQRRDAISAIKKDVFETLAGRVAAEGWNPAELSKEFGELEYRTMRDSVLDTKVRIDGRALDTVRPIAVKTGVLPRTHGSSLFTRGETQAIVTITLGTARDGQVIDAVAGEYKENFLFHYNFPPFSVGECGRMMGPKRREIGHGRLAKRGVLAVMPSLEAFPYTIRVVSEITESNGSSSMASVCGSSLALMDAGVPVKAPVAGIAMGLVKEGERFVVLSDILGDEDHLGDMDFKVAGTAEGISALQMDIKIEGITEEIMKQALQQAKAGRLHILGEMAHGLTAPREELSDYAPRLLTIKIHPDKIREVIGKGGSTIQAITKETGTQIDIQDDGTIVIASVNAIAAQAAKARIEQITSDVEPGRIYEGKVAKIMDFGAFVTILPGKDGLVHVSQISSDRVEKVGDVLKEGDVVKVKVLEVDKQGRIRLSMKAVEEGDAASAE.

Residues Asp487 and Asp493 each coordinate Mg(2+). The KH domain occupies 554 to 613 (PRLLTIKIHPDKIREVIGKGGSTIQAITKETGTQIDIQDDGTIVIASVNAIAAQAAKARI). One can recognise an S1 motif domain in the interval 623 to 691 (GRIYEGKVAK…KQGRIRLSMK (69 aa)).

Belongs to the polyribonucleotide nucleotidyltransferase family. As to quaternary structure, component of the RNA degradosome, which is a multiprotein complex involved in RNA processing and mRNA degradation. Mg(2+) serves as cofactor.

The protein resides in the cytoplasm. It catalyses the reaction RNA(n+1) + phosphate = RNA(n) + a ribonucleoside 5'-diphosphate. Functionally, involved in mRNA degradation. Catalyzes the phosphorolysis of single-stranded polyribonucleotides processively in the 3'- to 5'-direction. In Stenotrophomonas maltophilia (strain K279a), this protein is Polyribonucleotide nucleotidyltransferase.